The sequence spans 388 residues: Chorismate synthase (388 aa).

Residues Arg39 and Arg45 each contribute to the NADP(+) site. FMN-binding positions include 130-132 (RSS), 251-252 (NA), Gly296, 311-315 (KPIPT), and Arg337.

Belongs to the chorismate synthase family. As to quaternary structure, homotetramer. FMNH2 is required as a cofactor.

It catalyses the reaction 5-O-(1-carboxyvinyl)-3-phosphoshikimate = chorismate + phosphate. It participates in metabolic intermediate biosynthesis; chorismate biosynthesis; chorismate from D-erythrose 4-phosphate and phosphoenolpyruvate: step 7/7. In terms of biological role, catalyzes the anti-1,4-elimination of the C-3 phosphate and the C-6 proR hydrogen from 5-enolpyruvylshikimate-3-phosphate (EPSP) to yield chorismate, which is the branch point compound that serves as the starting substrate for the three terminal pathways of aromatic amino acid biosynthesis. This reaction introduces a second double bond into the aromatic ring system. This is Chorismate synthase from Streptococcus mutans serotype c (strain ATCC 700610 / UA159).